The following is a 318-amino-acid chain: Ubiquitin-like domain-containing CTD phosphatase 1 (318 aa).

One can recognise a Ubiquitin-like domain in the interval 3–81; the sequence is LSLIIKWGGQ…IMMMGTREES (79 aa). Residues 133-294 enclose the FCP1 homology domain; that stretch reads PREGKKLLVL…LKLSQYLKEI (162 aa). Mg(2+) is bound by residues aspartate 143, aspartate 145, and aspartate 253.

It depends on Mg(2+) as a cofactor.

Its subcellular location is the nucleus. It carries out the reaction O-phospho-L-seryl-[protein] + H2O = L-seryl-[protein] + phosphate. The catalysed reaction is O-phospho-L-threonyl-[protein] + H2O = L-threonyl-[protein] + phosphate. Dephosphorylates 26S nuclear proteasomes, thereby decreasing their proteolytic activity. Recruited to the 19S regulatory particle of the 26S proteasome where it dephosphorylates 19S component psmc2 which impairs psmc2 ATPase activity and disrupts 26S proteasome assembly. Has also been reported to stimulate the proteolytic activity of the 26S proteasome. The protein is Ubiquitin-like domain-containing CTD phosphatase 1 (ublcp1) of Xenopus tropicalis (Western clawed frog).